Reading from the N-terminus, the 37-residue chain is Large ribosomal subunit protein bL36c (37 aa).

It belongs to the bacterial ribosomal protein bL36 family.

Its subcellular location is the plastid. The polypeptide is Large ribosomal subunit protein bL36c (Helicosporidium sp. subsp. Simulium jonesii (Green alga)).